The primary structure comprises 899 residues: Toll-like receptor 4 (899 aa).

Residues 1–46 form the signal peptide; that stretch reads MCPLQIHVLHLIQGNQKNRKGKYVNMTRQLWYILPLLFLLCHCVTS. Residues N25, N75, N83, and N93 are each glycosylated (N-linked (GlcNAc...) asparagine). The Extracellular segment spans residues 47-702; the sequence is ERRCYFSKIS…LERNCRSYTA (656 aa). 7 LRR repeats span residues 83–103, 104–126, 128–150, 155–179, 181–202, 203–229, and 230–253; these read NESVVQIDLSNNSINVFPDLP, RSLLVLDISRNPLKQFQKNAFAR, QNLTTLSIVNNTYGLQPSNLTAG, LTRLTYLDLRGSWNGTAYPEEVLSD, VSLNALRINGKQKGFGVLMRKI, HALKRLDISGSEGDCKIDCLHAGYFQN, and VHGIQELNVSNCHLTNILEGTFSY. 4 N-linked (GlcNAc...) asparagine glycosylation sites follow: N129, N137, N146, and N168. Residues N237, N256, N275, and N313 are each glycosylated (N-linked (GlcNAc...) asparagine). LRR repeat units follow at residues 257–282, 313–336, 338–360, and 363–386; these read LTHLDISYNEELSFNILRNISKDLKN, NTSLRELHANSNRLETIQSGVLMY, PKTLQHASVSDNKLTMGMYALET, and LVNLKTYDMSLQFKSHDPRDIFSN. N388, N432, and N463 each carry an N-linked (GlcNAc...) asparagine glycan. LRR repeat units lie at residues 468 to 493, 501 to 524, 526 to 549, 554 to 577, 579 to 601, 602 to 624, and 631 to 654; these read HYPLLKYRIGNNKIKEIYAQDNVFYD, LEGLEILDLSNNFCTNLSTFFFDY, TGLKSVKLNHNILGFSLAKDEKGE, LLKLKHLEIKYNRIQVLPKKILRN, ISLETLDLADNWLRKFKVDLKHI, KGLRHIDLSNNQISELPPGVMRE, and SSNLTVNLTGNSLLCNCENEHFLR. N516 carries N-linked (GlcNAc...) asparagine glycosylation. N-linked (GlcNAc...) asparagine glycosylation is found at N633, N637, and N668. Residues 703 to 723 form a helical membrane-spanning segment; the sequence is VIVLFSCVFVILLTVIVCGVV. Topologically, residues 724 to 899 are cytoplasmic; sequence YRYRWKLRYL…WRKLRDPISM (176 aa). The TIR domain occupies 756-897; it reads YEFDAFISYA…IFWRKLRDPI (142 aa).

Belongs to the Toll-like receptor family. As to expression, expressed in all tissues tested. The highest expression is in the hepatopancreas, with moderate expression in the gills, and low expression in the gonads, adductor muscle, hemocytes, and mantle.

The protein resides in the cell membrane. In terms of biological role, may be involved in the innate immune response. The sequence is that of Toll-like receptor 4 from Pinctada imbricata (Atlantic pearl-oyster).